We begin with the raw amino-acid sequence, 55 residues long: Transcriptional regulator CdrS (55 aa).

Belongs to the CdrS family.

It localises to the cytoplasm. In terms of biological role, transcriptional regulator which plays a central role in the regulation of cell division. Activates the expression of the gene encoding the cell division protein FtsZ2, and of other genes encoding proteins predicted to function in critical aspects of cell division. Required for normal cell division but not for cell elongation. May act during the transition from stasis to growth. The CdrSL-FtsZ2 transcriptional network might coordinate cell division timing with cell growth. This Halobacterium salinarum (strain ATCC 700922 / JCM 11081 / NRC-1) (Halobacterium halobium) protein is Transcriptional regulator CdrS.